Consider the following 390-residue polypeptide: Phosphoglycerate kinase (390 aa).

Residues 21 to 23 (DLN), R36, 59 to 62 (HLGR), R114, and R147 contribute to the substrate site. ATP is bound by residues K198, E314, and 340–343 (GGDT).

It belongs to the phosphoglycerate kinase family. In terms of assembly, monomer.

The protein resides in the cytoplasm. The enzyme catalyses (2R)-3-phosphoglycerate + ATP = (2R)-3-phospho-glyceroyl phosphate + ADP. It participates in carbohydrate degradation; glycolysis; pyruvate from D-glyceraldehyde 3-phosphate: step 2/5. The protein is Phosphoglycerate kinase of Buchnera aphidicola subsp. Acyrthosiphon pisum (strain 5A).